Here is a 443-residue protein sequence, read N- to C-terminus: Aspartate--tRNA(Asp/Asn) ligase (443 aa).

Glutamate 175 serves as a coordination point for L-aspartate. The tract at residues 197-200 (QLFK) is aspartate. Residue arginine 219 coordinates L-aspartate. ATP contacts are provided by residues 219 to 221 (RAE), 227 to 229 (RHL), and glutamate 366. Mg(2+) is bound by residues glutamate 366 and serine 369. The L-aspartate site is built by serine 369 and arginine 373. Residue 414 to 417 (GCER) participates in ATP binding.

Belongs to the class-II aminoacyl-tRNA synthetase family. Type 2 subfamily. In terms of assembly, homodimer. The cofactor is Mg(2+).

The protein resides in the cytoplasm. The catalysed reaction is tRNA(Asx) + L-aspartate + ATP = L-aspartyl-tRNA(Asx) + AMP + diphosphate. Its function is as follows. Aspartyl-tRNA synthetase with relaxed tRNA specificity since it is able to aspartylate not only its cognate tRNA(Asp) but also tRNA(Asn). Reaction proceeds in two steps: L-aspartate is first activated by ATP to form Asp-AMP and then transferred to the acceptor end of tRNA(Asp/Asn). The protein is Aspartate--tRNA(Asp/Asn) ligase of Methanococcoides burtonii (strain DSM 6242 / NBRC 107633 / OCM 468 / ACE-M).